A 1434-amino-acid polypeptide reads, in one-letter code: Probable deoxyribonuclease RhsA (1434 aa).

The segment at 14–42 (AMHAGNRPNPPDDRPQPCRGKPPTSPGKT) is disordered. 2 helical membrane passes run 48 to 68 (FLGA…VAAA) and 70 to 90 (VFLV…LAVF). 3 YD repeats span residues 486 to 521 (YDAA…CADG), 592 to 628 (DDTG…LGRE), and 847 to 876 (YDAR…LTEV).

Belongs to the RHS/WapA nuclease family.

The protein resides in the membrane. In terms of biological role, toxic component of a toxin-immunity protein module, which functions as a cellular contact-dependent growth inhibition (CDI) system. This protein may be a nuclease that is specifically inhibited by its cognate immunity protein RhsAI. Upon expression of the C-terminus (residues 1284-1434) in E.coli growth is inhibited, cells elongate, nucleoids condense and plasmid DNA is degraded; these effects are blocked specifically by cognate immunity protein RshIA. Cell contact is necessary for growth inhibition. The protein is Probable deoxyribonuclease RhsA (rhsA) of Dickeya dadantii (strain 3937) (Erwinia chrysanthemi (strain 3937)).